The primary structure comprises 260 residues: MFEARLVQGSILKKVLEALKDLITEACWDVSSSGISLQSMDSSHVSLVQLTLRSDGFDSYRCDRNLAMGVNLSSMSKILKCAGNEDIITLRAEDNADALALVFETLNQEKVSDYEMKLMDLDVEQLGIPEQEYSCVVKMPSGEFARICRDLSQIGDAVMISCAKDGVKFSASGELGTGNIKLSQTSNVDKEDEAVTIEMNEPVQLIFALNYLNFFTKATPLSKTVTLSMSADIPLVVEYKIADMGHVKYYLAPKIDEESS.

The DNA-binding element occupies Arg61–Lys80. A Glycyl lysine isopeptide (Lys-Gly) (interchain with G-Cter in ubiquitin) cross-link involves residue Lys164. Ser259 and Ser260 each carry phosphoserine.

It belongs to the PCNA family. As to quaternary structure, homotrimer. Forms a complex with activator 1 heteropentamer in the presence of ATP. Component of the replisome complex. Post-translationally, monoubiquitinated by the ube2b-rad18 complex on Lys-164. Monoubiquitination at Lys-164 also takes place in undamaged proliferating cells, and is mediated by the dcx(dtl) complex, leading to enhance PCNA-dependent translesion DNA synthesis.

The protein localises to the nucleus. In terms of biological role, this protein is an auxiliary protein of DNA polymerase delta and is involved in the control of eukaryotic DNA replication by increasing the polymerase's processibility during elongation of the leading strand. The polypeptide is Proliferating cell nuclear antigen (pcna) (Danio rerio (Zebrafish)).